A 350-amino-acid chain; its full sequence is tRNA pseudouridine synthase D (350 aa).

Catalysis depends on Asp-79, which acts as the Nucleophile. A TRUD domain is found at 154–306; it reads GAPNYYGPQR…EQERRPIVLY (153 aa).

The protein belongs to the pseudouridine synthase TruD family.

It carries out the reaction uridine(13) in tRNA = pseudouridine(13) in tRNA. In terms of biological role, responsible for synthesis of pseudouridine from uracil-13 in transfer RNAs. The sequence is that of tRNA pseudouridine synthase D from Pseudoalteromonas atlantica (strain T6c / ATCC BAA-1087).